Here is a 155-residue protein sequence, read N- to C-terminus: Histone H2B.4 (155 aa).

The segment covering methionine 1–alanine 28 has biased composition (basic and acidic residues). Positions methionine 1–valine 62 are disordered. Residues proline 29 to lysine 40 are compositionally biased toward basic residues. Residue lysine 151 forms a Glycyl lysine isopeptide (Lys-Gly) (interchain with G-Cter in ubiquitin) linkage.

It belongs to the histone H2B family. The nucleosome is a histone octamer containing two molecules each of H2A, H2B, H3 and H4 assembled in one H3-H4 heterotetramer and two H2A-H2B heterodimers. The octamer wraps approximately 147 bp of DNA. Monoubiquitinated to form H2BK143ub1; may give a specific tag for epigenetic transcriptional activation.

It is found in the nucleus. The protein localises to the chromosome. Its function is as follows. Core component of nucleosome. Nucleosomes wrap and compact DNA into chromatin, limiting DNA accessibility to the cellular machineries which require DNA as a template. Histones thereby play a central role in transcription regulation, DNA repair, DNA replication and chromosomal stability. DNA accessibility is regulated via a complex set of post-translational modifications of histones, also called histone code, and nucleosome remodeling. This chain is Histone H2B.4, found in Volvox carteri (Green alga).